The primary structure comprises 275 residues: ATP synthase subunit delta (275 aa).

This sequence belongs to the ATPase delta chain family. In terms of assembly, F-type ATPases have 2 components, F(1) - the catalytic core - and F(0) - the membrane proton channel. F(1) has five subunits: alpha(3), beta(3), gamma(1), delta(1), epsilon(1). F(0) has three main subunits: a(1), b(2) and c(10-14). The alpha and beta chains form an alternating ring which encloses part of the gamma chain. F(1) is attached to F(0) by a central stalk formed by the gamma and epsilon chains, while a peripheral stalk is formed by the delta and b chains.

It is found in the cell membrane. In terms of biological role, f(1)F(0) ATP synthase produces ATP from ADP in the presence of a proton or sodium gradient. F-type ATPases consist of two structural domains, F(1) containing the extramembraneous catalytic core and F(0) containing the membrane proton channel, linked together by a central stalk and a peripheral stalk. During catalysis, ATP synthesis in the catalytic domain of F(1) is coupled via a rotary mechanism of the central stalk subunits to proton translocation. Functionally, this protein is part of the stalk that links CF(0) to CF(1). It either transmits conformational changes from CF(0) to CF(1) or is implicated in proton conduction. This Arthrobacter sp. (strain FB24) protein is ATP synthase subunit delta.